Here is a 205-residue protein sequence, read N- to C-terminus: Adenylyl-sulfate kinase (205 aa).

31-38 contacts ATP; the sequence is GLSGSGKS. The Phosphoserine intermediate role is filled by Ser105.

It belongs to the APS kinase family.

It catalyses the reaction adenosine 5'-phosphosulfate + ATP = 3'-phosphoadenylyl sulfate + ADP + H(+). It participates in sulfur metabolism; hydrogen sulfide biosynthesis; sulfite from sulfate: step 2/3. Catalyzes the synthesis of activated sulfate. The chain is Adenylyl-sulfate kinase from Shewanella halifaxensis (strain HAW-EB4).